A 303-amino-acid polypeptide reads, in one-letter code: Protease HtpX homolog (303 aa).

2 helical membrane-spanning segments follow: residues 19–39 (IIIF…VSYF) and 41–61 (LGEF…YYAY). Residue His146 coordinates Zn(2+). Residue Glu147 is part of the active site. His150 serves as a coordination point for Zn(2+). 2 consecutive transmembrane segments (helical) span residues 156 to 176 (VRLQ…GDSL) and 192 to 212 (NILG…ATLL). Glu221 lines the Zn(2+) pocket.

It belongs to the peptidase M48B family. Requires Zn(2+) as cofactor.

The protein localises to the cell inner membrane. This is Protease HtpX homolog from Dictyoglomus thermophilum (strain ATCC 35947 / DSM 3960 / H-6-12).